We begin with the raw amino-acid sequence, 292 residues long: Brix domain-containing protein ZK795.3 (292 aa).

The Brix domain maps to 78-259; the sequence is PKIVITTSRD…PYQIKLGTLE (182 aa).

In Caenorhabditis elegans, this protein is Brix domain-containing protein ZK795.3.